Consider the following 216-residue polypeptide: Pyridoxine/pyridoxamine 5'-phosphate oxidase (216 aa).

Substrate is bound by residues 9-12 (RLSY) and Arg-67. FMN contacts are provided by residues 62 to 67 (RIVLLR), 77 to 78 (YT), Lys-84, and Gln-106. Positions 124, 128, and 132 each coordinate substrate. Residues 142–143 (QS) and Trp-188 contribute to the FMN site. Substrate is bound at residue 194–196 (RMH). An FMN-binding site is contributed by Arg-198.

It belongs to the pyridoxamine 5'-phosphate oxidase family. In terms of assembly, homodimer. The cofactor is FMN.

It carries out the reaction pyridoxamine 5'-phosphate + O2 + H2O = pyridoxal 5'-phosphate + H2O2 + NH4(+). The enzyme catalyses pyridoxine 5'-phosphate + O2 = pyridoxal 5'-phosphate + H2O2. It participates in cofactor metabolism; pyridoxal 5'-phosphate salvage; pyridoxal 5'-phosphate from pyridoxamine 5'-phosphate: step 1/1. It functions in the pathway cofactor metabolism; pyridoxal 5'-phosphate salvage; pyridoxal 5'-phosphate from pyridoxine 5'-phosphate: step 1/1. Its function is as follows. Catalyzes the oxidation of either pyridoxine 5'-phosphate (PNP) or pyridoxamine 5'-phosphate (PMP) into pyridoxal 5'-phosphate (PLP). The chain is Pyridoxine/pyridoxamine 5'-phosphate oxidase from Psychrobacter cryohalolentis (strain ATCC BAA-1226 / DSM 17306 / VKM B-2378 / K5).